A 452-amino-acid chain; its full sequence is UDP-N-acetylmuramoylalanine--D-glutamate ligase (452 aa).

ATP is bound at residue Gly-119–Thr-125.

The protein belongs to the MurCDEF family.

The protein resides in the cytoplasm. The catalysed reaction is UDP-N-acetyl-alpha-D-muramoyl-L-alanine + D-glutamate + ATP = UDP-N-acetyl-alpha-D-muramoyl-L-alanyl-D-glutamate + ADP + phosphate + H(+). It participates in cell wall biogenesis; peptidoglycan biosynthesis. Cell wall formation. Catalyzes the addition of glutamate to the nucleotide precursor UDP-N-acetylmuramoyl-L-alanine (UMA). The chain is UDP-N-acetylmuramoylalanine--D-glutamate ligase from Streptococcus pyogenes serotype M2 (strain MGAS10270).